The primary structure comprises 257 residues: Hydroxyacylglutathione hydrolase (257 aa).

Residues His54, His56, Asp58, His59, His113, Asp137, and His175 each coordinate Zn(2+).

This sequence belongs to the metallo-beta-lactamase superfamily. Glyoxalase II family. In terms of assembly, monomer. Zn(2+) serves as cofactor.

The catalysed reaction is an S-(2-hydroxyacyl)glutathione + H2O = a 2-hydroxy carboxylate + glutathione + H(+). The protein operates within secondary metabolite metabolism; methylglyoxal degradation; (R)-lactate from methylglyoxal: step 2/2. Thiolesterase that catalyzes the hydrolysis of S-D-lactoyl-glutathione to form glutathione and D-lactic acid. In Acaryochloris marina (strain MBIC 11017), this protein is Hydroxyacylglutathione hydrolase.